We begin with the raw amino-acid sequence, 206 residues long: HTH-type transcriptional regulator Hpr (206 aa).

The 145-residue stretch at 13-157 (ALLFSQRMAQ…MMSIIRHIYG (145 aa)) folds into the HTH marR-type domain. The H-T-H motif DNA-binding region spans 63 to 86 (ISEIAKFGVMHVSTAFNFSKKLEE). The tract at residues 177-206 (SEEGKMKKKQEAKEAGESIEVDKPLEPLKN) is disordered. A compositionally biased stretch (basic and acidic residues) spans 178 to 206 (EEGKMKKKQEAKEAGESIEVDKPLEPLKN).

As to quaternary structure, homodimer.

Its function is as follows. Negative regulator of protease production and sporulation. In Bacillus licheniformis (strain ATCC 14580 / DSM 13 / JCM 2505 / CCUG 7422 / NBRC 12200 / NCIMB 9375 / NCTC 10341 / NRRL NRS-1264 / Gibson 46), this protein is HTH-type transcriptional regulator Hpr.